Here is a 466-residue protein sequence, read N- to C-terminus: MGRQAFEFGLRPKDQFKVMQHFDLNTNHLEVLNRLYTPLIGTQAVGLYHFMTQFVKESHNETLILSHYIFMNELKINLLEFRQQMDLLEAIGLLKAFVKHDEQETQFVYQLIQPPSAHLFFNDPMLSIFLYSEVEHRRFHELKKYFEYQQIDLSEFKQVTRQFTDVFKVPSTKIDIDTSDIPINEPYQGIDLSNESFDFEMLRQMLGKHFISQDIVTKDAKRLITQLATLYGLTADGMKHVILNSITSGQQLSFEEMRKQARSYYLMEHENQMPKLQVKSPATSSSAGKSSEVNPKPQSDEWFELLEQTSPIDMLASWSESEPTISQKTMVEELIEREKMSFGVINILLQFVMLKEDMKLPKAYILEIASNWKKKGIKTAKEAYNYAKKVNQPKNEGSSGNYQKRGSYYGQRNRISKEKTPKWLENRDKPSEEDSAKDNSVDDQQLEQDRQAFLDKLSKKWEEDSQ.

Residues 3-113 (RQAFEFGLRP…ETQFVYQLIQ (111 aa)) are DDBH1. Residues 200–292 (EMLRQMLGKH…TSSSAGKSSE (93 aa)) are DDBH2-1. The segment at 293–401 (VNPKPQSDEW…QPKNEGSSGN (109 aa)) is DDBH2-2.

The protein belongs to the DnaB/DnaD family. In terms of assembly, homotetramer, higher-order oligomers are induced by ssDNA. The DNA replisome assembles sequentially on oriC in this order; DnaA, DnaD, DnaB, DnaI-DnaC helicase. Part of the replication restart primosome, PriA binds first, then DnaD and subsequently DnaB bind.

Functionally, helps DnaI load the DnaC replicative helicase onto single-stranded (ss)DNA. During DNA replication from the origin of replication (oriC) in the DNA replisome, DnaB and DnaD are required after DnaA and before subsequent helicase DnaC loading. Component of the replication restart primosome, which reloads the replicative helicase on sites other than oriC. Essential for replication initiation of the chromosome and plasmids. Remodels DNA, laterally compacts supercoiled plasmid and linear DNA. Binds supercoiled, nicked and linear double-stranded (ds)DNA and phage phiX174 single-stranded (ss)DNA; phiX174 ssDNA is a better substrate than for B.subtilis. No binding to phage M13 ssDNA although it induces oligomers. The protein is Replicative helicase loading/DNA remodeling protein DnaB of Staphylococcus aureus (strain NCTC 8325 / PS 47).